Reading from the N-terminus, the 218-residue chain is Outer-membrane lipoprotein LolB (218 aa).

The first 20 residues, 1 to 20 (MSQVIRTLALTGLALAGLSG), serve as a signal peptide directing secretion. C21 is lipidated: N-palmitoyl cysteine. C21 carries S-diacylglycerol cysteine lipidation.

Belongs to the LolB family. Monomer.

It is found in the cell outer membrane. Its function is as follows. Plays a critical role in the incorporation of lipoproteins in the outer membrane after they are released by the LolA protein. In Xanthomonas campestris pv. campestris (strain 8004), this protein is Outer-membrane lipoprotein LolB.